Here is a 416-residue protein sequence, read N- to C-terminus: Putative competence-damage inducible protein (416 aa).

The protein belongs to the CinA family.

The polypeptide is Putative competence-damage inducible protein (Geobacillus sp. (strain WCH70)).